The following is a 455-amino-acid chain: Epoxide hydrolase 1 (455 aa).

Residues 1-21 (MLLELLLASVLGFVIYWFVSG) form a helical; Signal-anchor for type III membrane protein membrane-spanning segment. Topologically, residues 22 to 455 (DKEESLPLED…CKFVGLVERQ (434 aa)) are cytoplasmic. Catalysis depends on D226, which acts as the Nucleophile. R295 carries the dimethylated arginine modification. Y374 acts as the Proton donor in catalysis. H431 (proton acceptor) is an active-site residue.

The protein belongs to the peptidase S33 family.

It is found in the microsome membrane. Its subcellular location is the endoplasmic reticulum membrane. The enzyme catalyses cis-stilbene oxide + H2O = (1R,2R)-hydrobenzoin. It catalyses the reaction 1-(4-methoxyphenyl)-N-methyl-N-[(3-methyloxetan-3-yl)methyl]methanamine + H2O = 2-{[(4-methoxybenzyl)(methyl)amino]methyl}-2-methylpropane-1,3-diol. It carries out the reaction 8,9-epoxy-(5Z,11Z,14Z)-eicosatrienoate + H2O = 8,9-dihydroxy-(5Z,11Z,14Z)-eicosatrienoate. The catalysed reaction is 11,12-epoxy-(5Z,8Z,14Z)-eicosatrienoate + H2O = 11,12-dihydroxy-(5Z,8Z,14Z)-eicosatrienoate. The enzyme catalyses 2-(5Z,8Z,11Z,14Z-eicosatetraenoyl)-glycerol + H2O = glycerol + (5Z,8Z,11Z,14Z)-eicosatetraenoate + H(+). Inhibited by 10-hydroxystearamide and methoxy-arachidonyl fluorophosphate. Its function is as follows. Biotransformation enzyme that catalyzes the hydrolysis of arene and aliphatic epoxides to less reactive and more water soluble dihydrodiols by the trans addition of water. May play a role in the metabolism of endogenous lipids such as epoxide-containing fatty acids. Metabolizes the abundant endocannabinoid 2-arachidonoylglycerol (2-AG) to free arachidonic acid (AA) and glycerol. Binds 20(S)-hydroxycholesterol (20(S)-OHC). The protein is Epoxide hydrolase 1 (EPHX1) of Oryctolagus cuniculus (Rabbit).